The sequence spans 494 residues: Sphingosine-1-phosphate transporter MFSD2B (494 aa).

Positions 1–12 are enriched in pro residues; sequence MSVPHGPTPAPV. The segment at 1–26 is disordered; it reads MSVPHGPTPAPVAEPHTQEPGSDKRD. 10 helical membrane passes run 103–123, 140–160, 179–199, 223–243, 277–297, 310–330, 339–359, 360–380, 402–422, and 449–469; these read LMPWALGCMPLIALAYFFLWF, CLFQALATFFQVPYTALTMIL, MAGTLMGATVHGLIVSSAHGS, IAAAVVALTYPVCGSLLCLGV, VVSFLFISAAVQVEQSYLVLF, NLVLIILVSAVLSTPLWEWVL, AFGICVMVPFSILLAAVPSAP, VAYVVAFVSGVSIAVSLLLPW, TIFYSSYVFFTKLSGAGALGI, and VLIGAVPTCMILIGLCILLVG. The segment at 473–494 is disordered; that stretch reads KMPRQDTSSQLSLRRRTSYSLA. The segment covering 485 to 494 has biased composition (basic residues); that stretch reads LRRRTSYSLA.

The protein belongs to the major facilitator superfamily. In terms of tissue distribution, widely expressed with highest expression in spleen, lung and testis. Predominantly expressed in erythroid lineages giving rise to erythrocytes and platelets, but absent in lymphoid lineages.

It localises to the cell membrane. It carries out the reaction sphing-4-enine 1-phosphate(in) = sphing-4-enine 1-phosphate(out). The catalysed reaction is sphinganine 1-phosphate(in) = sphinganine 1-phosphate(out). The enzyme catalyses sphinga-4E,14Z-dienine-1-phosphate(in) = sphinga-4E,14Z-dienine-1-phosphate(out). Functionally, lipid transporter that specifically mediates export of sphingosine-1-phosphate in red blood cells and platelets. Sphingosine-1-phosphate is a signaling sphingolipid and its export from red blood cells into in the plasma is required for red blood cell morphology. Sphingosine-1-phosphate export from platelets is required for platelet aggregation and thrombus formation. Mediates the export of different sphingosine-1-phosphate (S1P) species, including S1P(d18:0) (sphinganine 1-phosphate), S1P (d18:1) (sphing-4-enine 1-phosphate) and S1P (d18:2) (sphinga-4E,14Z-dienine-1-phosphate). Release of sphingosine-1-phosphate is facilitated by a proton gradient. In contrast, cations, such as sodium, are not required to drive sphingosine-1-phosphate transport. In addition to export, also able to mediate S1P import. Does not transport lysophosphatidylcholine (LPC). The protein is Sphingosine-1-phosphate transporter MFSD2B of Mus musculus (Mouse).